Reading from the N-terminus, the 369-residue chain is tRNA/tmRNA (uracil-C(5))-methyltransferase (369 aa).

5 residues coordinate S-adenosyl-L-methionine: Gln-193, Tyr-221, Asn-226, Glu-242, and Asp-302. Residue Cys-327 is the Nucleophile of the active site. The active-site Proton acceptor is Glu-361.

It belongs to the class I-like SAM-binding methyltransferase superfamily. RNA M5U methyltransferase family. TrmA subfamily.

It carries out the reaction uridine(54) in tRNA + S-adenosyl-L-methionine = 5-methyluridine(54) in tRNA + S-adenosyl-L-homocysteine + H(+). The enzyme catalyses uridine(341) in tmRNA + S-adenosyl-L-methionine = 5-methyluridine(341) in tmRNA + S-adenosyl-L-homocysteine + H(+). In terms of biological role, dual-specificity methyltransferase that catalyzes the formation of 5-methyluridine at position 54 (m5U54) in all tRNAs, and that of position 341 (m5U341) in tmRNA (transfer-mRNA). The protein is tRNA/tmRNA (uracil-C(5))-methyltransferase of Sulfurimonas denitrificans (strain ATCC 33889 / DSM 1251) (Thiomicrospira denitrificans (strain ATCC 33889 / DSM 1251)).